Here is a 408-residue protein sequence, read N- to C-terminus: Dual-specificity RNA methyltransferase RlmN (408 aa).

Glutamate 93 acts as the Proton acceptor in catalysis. Positions 99–379 constitute a Radical SAM core domain; it reads ETNRGTLCIS…TTTRKTRGDD (281 aa). A disulfide bridge links cysteine 106 with cysteine 384. [4Fe-4S] cluster-binding residues include cysteine 113, cysteine 117, and cysteine 120. The interval 152–196 is disordered; it reads SPAGSKDGDGGPDHASRATKLDHRAADAKGVQSDSWRSSDPEEDH. Residues 157-178 show a composition bias toward basic and acidic residues; that stretch reads KDGDGGPDHASRATKLDHRAAD. Residues 210–211, serine 242, 264–266, and asparagine 341 contribute to the S-adenosyl-L-methionine site; these read GE and SLH. The active-site S-methylcysteine intermediate is the cysteine 384.

Belongs to the radical SAM superfamily. RlmN family. [4Fe-4S] cluster serves as cofactor.

It localises to the cytoplasm. The catalysed reaction is adenosine(2503) in 23S rRNA + 2 reduced [2Fe-2S]-[ferredoxin] + 2 S-adenosyl-L-methionine = 2-methyladenosine(2503) in 23S rRNA + 5'-deoxyadenosine + L-methionine + 2 oxidized [2Fe-2S]-[ferredoxin] + S-adenosyl-L-homocysteine. It carries out the reaction adenosine(37) in tRNA + 2 reduced [2Fe-2S]-[ferredoxin] + 2 S-adenosyl-L-methionine = 2-methyladenosine(37) in tRNA + 5'-deoxyadenosine + L-methionine + 2 oxidized [2Fe-2S]-[ferredoxin] + S-adenosyl-L-homocysteine. Specifically methylates position 2 of adenine 2503 in 23S rRNA and position 2 of adenine 37 in tRNAs. m2A2503 modification seems to play a crucial role in the proofreading step occurring at the peptidyl transferase center and thus would serve to optimize ribosomal fidelity. The protein is Dual-specificity RNA methyltransferase RlmN of Aromatoleum aromaticum (strain DSM 19018 / LMG 30748 / EbN1) (Azoarcus sp. (strain EbN1)).